The chain runs to 1712 residues: Probable ATP-dependent RNA helicase DDX60 (1712 aa).

A Helicase ATP-binding domain is found at 772-939; that stretch reads LDVVDKNESA…WLQSVKWYWK (168 aa). Residue 785 to 792 coordinates ATP; sequence APTSSGKT. The DEVH box signature appears at 889–892; that stretch reads DEVH. In terms of domain architecture, Helicase C-terminal spans 1226–1370; that stretch reads YADQKAVDTE…HFPLSITLVL (145 aa).

This sequence belongs to the helicase family. In terms of assembly, interacts with EXOSC1, EXOSC4, RIGI, IFIH1/MDA5 and DHX58/LGP2. In terms of tissue distribution, brain, lymph node, prostate, stomach, thyroid, tongue, trachea, uterus, skeletal muscle, spleen, kidney, liver and small intestine.

It localises to the cytoplasm. It carries out the reaction ATP + H2O = ADP + phosphate + H(+). Positively regulates RIGI- and IFIH1/MDA5-dependent type I interferon and interferon inducible gene expression in response to viral infection. Binds ssRNA, dsRNA and dsDNA and can promote the binding of RIGI to dsRNA. Exhibits antiviral activity against hepatitis C virus and vesicular stomatitis virus (VSV). This is Probable ATP-dependent RNA helicase DDX60 (DDX60) from Homo sapiens (Human).